The primary structure comprises 344 residues: Phosphate acyltransferase (344 aa).

Belongs to the PlsX family. In terms of assembly, homodimer. Probably interacts with PlsY.

The protein resides in the cytoplasm. The enzyme catalyses a fatty acyl-[ACP] + phosphate = an acyl phosphate + holo-[ACP]. The protein operates within lipid metabolism; phospholipid metabolism. Catalyzes the reversible formation of acyl-phosphate (acyl-PO(4)) from acyl-[acyl-carrier-protein] (acyl-ACP). This enzyme utilizes acyl-ACP as fatty acyl donor, but not acyl-CoA. In Sodalis glossinidius (strain morsitans), this protein is Phosphate acyltransferase.